Consider the following 429-residue polypeptide: Adenylosuccinate synthetase (429 aa).

GTP is bound by residues 13–19 (GDEGKGK) and 41–43 (GHT). Catalysis depends on Asp-14, which acts as the Proton acceptor. 2 residues coordinate Mg(2+): Asp-14 and Gly-41. IMP-binding positions include 14–17 (DEGK), 39–42 (NAGH), Thr-130, Arg-144, Gln-225, Thr-240, and Arg-304. His-42 acts as the Proton donor in catalysis. Position 300–306 (300–306 (ATTGRRR)) interacts with substrate. Residues Arg-306, 332–334 (KLD), and 417–419 (STG) each bind GTP.

This sequence belongs to the adenylosuccinate synthetase family. Homodimer. Mg(2+) is required as a cofactor.

Its subcellular location is the cytoplasm. It catalyses the reaction IMP + L-aspartate + GTP = N(6)-(1,2-dicarboxyethyl)-AMP + GDP + phosphate + 2 H(+). It functions in the pathway purine metabolism; AMP biosynthesis via de novo pathway; AMP from IMP: step 1/2. Plays an important role in the de novo pathway of purine nucleotide biosynthesis. Catalyzes the first committed step in the biosynthesis of AMP from IMP. In Buchnera aphidicola subsp. Baizongia pistaciae (strain Bp), this protein is Adenylosuccinate synthetase.